The following is a 65-amino-acid chain: Large ribosomal subunit protein bL35 (65 aa).

The protein belongs to the bacterial ribosomal protein bL35 family.

This Psychrobacter sp. (strain PRwf-1) protein is Large ribosomal subunit protein bL35.